A 428-amino-acid polypeptide reads, in one-letter code: Adenylosuccinate synthetase (428 aa).

GTP contacts are provided by residues 12 to 18 (GDEGKGK) and 40 to 42 (GHS). Aspartate 13 serves as the catalytic Proton acceptor. The Mg(2+) site is built by aspartate 13 and glycine 40. IMP contacts are provided by residues 13 to 16 (DEGK), 38 to 41 (NAGH), threonine 128, arginine 142, glutamine 223, threonine 238, and arginine 302. Histidine 41 functions as the Proton donor in the catalytic mechanism. Substrate is bound at residue 298–304 (VTTGRPR). GTP-binding positions include arginine 304, 330-332 (KLD), and 412-414 (GTG).

This sequence belongs to the adenylosuccinate synthetase family. Homodimer. Mg(2+) is required as a cofactor.

It is found in the cytoplasm. The catalysed reaction is IMP + L-aspartate + GTP = N(6)-(1,2-dicarboxyethyl)-AMP + GDP + phosphate + 2 H(+). It participates in purine metabolism; AMP biosynthesis via de novo pathway; AMP from IMP: step 1/2. In terms of biological role, plays an important role in the de novo pathway of purine nucleotide biosynthesis. Catalyzes the first committed step in the biosynthesis of AMP from IMP. The polypeptide is Adenylosuccinate synthetase (Bifidobacterium longum subsp. infantis (strain ATCC 15697 / DSM 20088 / JCM 1222 / NCTC 11817 / S12)).